The sequence spans 257 residues: MDRIIEKLDHGWWVVSHEQKLWLPKGELPYGEAANFDLVGQRALQIGEWQGEPVWLVQQQRRHDMGSVRQVIDLDVGLFQLAGRGVQLAEFYRSHKYCGYCGHEMYPSKTEWAMLCSHCRERYYPQIAPCIIVAIRRDDSILLAQHTRHRNGVHTVLAGFVEVGETLEQAVAREVMEESGIKVKNLRYVTSQPWPFPQSLMTAFMAEYDSGEIVIDPKELLEANWYRYDDLPLLPPPGTVARRLIEDTVAMCRAEYE.

Substrate contacts are provided by K25 and R69. 2 residues coordinate Zn(2+): C98 and C101. Residue E111 coordinates substrate. Positions 116 and 119 each coordinate Zn(2+). Y124 lines the substrate pocket. In terms of domain architecture, Nudix hydrolase spans 125 to 248; that stretch reads PQIAPCIIVA…TVARRLIEDT (124 aa). A divalent metal cation-binding residues include A158, E174, and E178. A Nudix box motif is present at residues 159–180; sequence GFVEVGETLEQAVAREVMEESG. 192 to 199 provides a ligand contact to substrate; it reads QPWPFPQS. E219 provides a ligand contact to a divalent metal cation. Substrate is bound at residue A241.

The protein belongs to the Nudix hydrolase family. NudC subfamily. In terms of assembly, homodimer. The cofactor is Mg(2+). Mn(2+) is required as a cofactor. Zn(2+) serves as cofactor.

It catalyses the reaction a 5'-end NAD(+)-phospho-ribonucleoside in mRNA + H2O = a 5'-end phospho-adenosine-phospho-ribonucleoside in mRNA + beta-nicotinamide D-ribonucleotide + 2 H(+). It carries out the reaction NAD(+) + H2O = beta-nicotinamide D-ribonucleotide + AMP + 2 H(+). The enzyme catalyses NADH + H2O = reduced beta-nicotinamide D-ribonucleotide + AMP + 2 H(+). MRNA decapping enzyme that specifically removes the nicotinamide adenine dinucleotide (NAD) cap from a subset of mRNAs by hydrolyzing the diphosphate linkage to produce nicotinamide mononucleotide (NMN) and 5' monophosphate mRNA. The NAD-cap is present at the 5'-end of some mRNAs and stabilizes RNA against 5'-processing. Has preference for mRNAs with a 5'-end purine. Catalyzes the hydrolysis of a broad range of dinucleotide pyrophosphates. The sequence is that of NAD-capped RNA hydrolase NudC from Escherichia coli O7:K1 (strain IAI39 / ExPEC).